The chain runs to 292 residues: Homoserine kinase (292 aa).

An ATP-binding site is contributed by P84 to A94.

The protein belongs to the GHMP kinase family. Homoserine kinase subfamily.

It is found in the cytoplasm. It carries out the reaction L-homoserine + ATP = O-phospho-L-homoserine + ADP + H(+). It functions in the pathway amino-acid biosynthesis; L-threonine biosynthesis; L-threonine from L-aspartate: step 4/5. Catalyzes the ATP-dependent phosphorylation of L-homoserine to L-homoserine phosphate. This Campylobacter hominis (strain ATCC BAA-381 / DSM 21671 / CCUG 45161 / LMG 19568 / NCTC 13146 / CH001A) protein is Homoserine kinase.